We begin with the raw amino-acid sequence, 511 residues long: Cytochrome P450 71A6 (511 aa).

The next 2 helical transmembrane spans lie at isoleucine 1–leucine 15 and valine 61–proline 77. Asparagine 90, asparagine 96, and asparagine 167 each carry an N-linked (GlcNAc...) asparagine glycan. Cysteine 450 provides a ligand contact to heme.

The protein belongs to the cytochrome P450 family. It depends on heme as a cofactor.

Its subcellular location is the membrane. The chain is Cytochrome P450 71A6 (CYP71A6) from Nepeta racemosa (Catmint).